We begin with the raw amino-acid sequence, 380 residues long: Cytochrome b (380 aa).

The next 4 helical transmembrane spans lie at 34–54 (FGSLLGICLLTQILTGLLLAM), 78–99 (WLIRNLHANGASFFFICIYLHI), 114–134 (WNTGVILLLTLMATAFVGYVL), and 179–199 (FFALHFLLPFMITGLTTIHLT). Heme b-binding residues include H84 and H98. Heme b is bound by residues H183 and H197. H202 contacts a ubiquinone. Transmembrane regions (helical) follow at residues 227–247 (LKDFLGFTLMLLPLTTLALFS), 289–309 (LGGVLALAASVLILFLAPFLH), 321–341 (ISQLLFWILVTNLLILTWVGS), and 348–368 (FIIIGQLASITYFTILLILFP).

This sequence belongs to the cytochrome b family. In terms of assembly, the cytochrome bc1 complex contains 11 subunits: 3 respiratory subunits (MT-CYB, CYC1 and UQCRFS1), 2 core proteins (UQCRC1 and UQCRC2) and 6 low-molecular weight proteins (UQCRH/QCR6, UQCRB/QCR7, UQCRQ/QCR8, UQCR10/QCR9, UQCR11/QCR10 and a cleavage product of UQCRFS1). This cytochrome bc1 complex then forms a dimer. Heme b serves as cofactor.

Its subcellular location is the mitochondrion inner membrane. Its function is as follows. Component of the ubiquinol-cytochrome c reductase complex (complex III or cytochrome b-c1 complex) that is part of the mitochondrial respiratory chain. The b-c1 complex mediates electron transfer from ubiquinol to cytochrome c. Contributes to the generation of a proton gradient across the mitochondrial membrane that is then used for ATP synthesis. This chain is Cytochrome b (MT-CYB), found in Pelecanoides urinatrix (Common diving petrel).